The following is a 223-amino-acid chain: uncharacterized protein (223 aa).

Residues Met1 to Arg30 form a disordered region. Acidic residues predominate over residues Leu12 to Met25. A run of 4 helical transmembrane segments spans residues Tyr35–Tyr55, Met56–Leu76, Ile129–Leu149, and Phe154–Tyr174.

The protein belongs to the TVP23 family.

It localises to the membrane. This is an uncharacterized protein from Drosophila melanogaster (Fruit fly).